The sequence spans 130 residues: Protein ApaG (130 aa).

Residues 3–127 (RAVTRQIEVT…FSLDSPDNKR (125 aa)) enclose the ApaG domain.

The chain is Protein ApaG from Bradyrhizobium diazoefficiens (strain JCM 10833 / BCRC 13528 / IAM 13628 / NBRC 14792 / USDA 110).